A 344-amino-acid polypeptide reads, in one-letter code: Palmitoyltransferase ZDHHC4 (344 aa).

The Lumenal segment spans residues 1–2 (MD). The chain crosses the membrane as a helical span at residues 3–23 (FLVLFLFYLASVLMGLVLICV). Over 24 to 67 (CSKTHSLKGLARGGAQIFSCIIPECLQRAVHGLLHYLFHTRNHT) the chain is Cytoplasmic. A helical membrane pass occupies residues 68 to 88 (FIVLHLVLQGMVYTEYTWEVF). The Lumenal portion of the chain corresponds to 89 to 99 (GYCQELELSLH). A helical membrane pass occupies residues 100-120 (YLLLPYLLLGVNLFFFTLTCG). The Cytoplasmic segment spans residues 121–192 (TNPGIITKAN…NNCIGAWNIR (72 aa)). Positions 149 to 199 (VRCSTCDLRKPARSKHCSVCNWCVHRFDHHCVWVNNCIGAWNIRYFLIYVL) constitute a DHHC domain. The S-palmitoyl cysteine intermediate role is filled by Cys179. The helical transmembrane segment at 193-213 (YFLIYVLTLTASAATVAIVST) threads the bilayer. At 214 to 255 (TFLVHLVVMSDLYQETYIDDLGHLHVMDTVFLIQYLFLTFPR) the chain is on the lumenal side. The helical transmembrane segment at 256–276 (IVFMLGFVVVLSFLLGGYLLF) threads the bilayer. The Cytoplasmic portion of the chain corresponds to 277-344 (VLYLAATNQT…FPCHERKKQE (68 aa)). The Di-lysine motif signature appears at 341–344 (KKQE).

Belongs to the DHHC palmitoyltransferase family. In terms of assembly, interacts with CPT1A.

The protein localises to the endoplasmic reticulum membrane. The protein resides in the golgi apparatus membrane. Its subcellular location is the cell membrane. It carries out the reaction L-cysteinyl-[protein] + hexadecanoyl-CoA = S-hexadecanoyl-L-cysteinyl-[protein] + CoA. Its function is as follows. Palmitoyltransferase that catalyzes the addition of palmitate onto protein substrates including the D(2) dopamine receptor DRD2, GSK3B or MAVS. Mediates GSK3B palmitoylation to prevent its AKT1-mediated phosphorylation leading to activation of the STAT3 signaling pathway. Also catalyzes MAVS palmitoylation which promotes its stabilization and activation by inhibiting 'Lys-48'- but facilitating 'Lys-63'-linked ubiquitination. This Homo sapiens (Human) protein is Palmitoyltransferase ZDHHC4.